The sequence spans 218 residues: Small ribosomal subunit protein uS5 (218 aa).

In terms of domain architecture, S5 DRBM spans 55–118; sequence LDHEVIDVSI…RNAKLNIIPV (64 aa).

This sequence belongs to the universal ribosomal protein uS5 family. In terms of assembly, part of the 30S ribosomal subunit. Contacts protein S4.

Functionally, with S4 and S12 plays an important role in translational accuracy. The protein is Small ribosomal subunit protein uS5 of Aeropyrum pernix (strain ATCC 700893 / DSM 11879 / JCM 9820 / NBRC 100138 / K1).